Here is a 128-residue protein sequence, read N- to C-terminus: Large ribosomal subunit protein bL19 (128 aa).

This sequence belongs to the bacterial ribosomal protein bL19 family.

This protein is located at the 30S-50S ribosomal subunit interface and may play a role in the structure and function of the aminoacyl-tRNA binding site. This chain is Large ribosomal subunit protein bL19, found in Bradyrhizobium sp. (strain ORS 278).